Here is a 398-residue protein sequence, read N- to C-terminus: Tyrosine--tRNA ligase (398 aa).

The short motif at 48–57 is the 'HIGH' region element; the sequence is PTGADIHLGH. Positions 235–239 match the 'KMSKS' region motif; that stretch reads KMSKS. Lysine 238 is an ATP binding site. The region spanning 334 to 398 is the S4 RNA-binding domain; sequence VKLAYLLGAT…GKNKFMRLVP (65 aa).

The protein belongs to the class-I aminoacyl-tRNA synthetase family. TyrS type 2 subfamily. Homodimer.

It localises to the cytoplasm. It carries out the reaction tRNA(Tyr) + L-tyrosine + ATP = L-tyrosyl-tRNA(Tyr) + AMP + diphosphate + H(+). Its function is as follows. Catalyzes the attachment of tyrosine to tRNA(Tyr) in a two-step reaction: tyrosine is first activated by ATP to form Tyr-AMP and then transferred to the acceptor end of tRNA(Tyr). This is Tyrosine--tRNA ligase from Nostoc sp. (strain PCC 7120 / SAG 25.82 / UTEX 2576).